Consider the following 690-residue polypeptide: Highly divergent homeobox (690 aa).

A DNA-binding region (homeobox 1) is located at residues Leu-3–Asn-63. 2 disordered regions span residues Lys-55–Ser-76 and Ser-112–Glu-132. Residues Ser-64 to Ser-76 are compositionally biased toward low complexity. Polar residues predominate over residues Pro-113–Asn-123. Glycyl lysine isopeptide (Lys-Gly) (interchain with G-Cter in SUMO2) cross-links involve residues Lys-135, Lys-140, Lys-144, Lys-163, Lys-172, Lys-194, Lys-212, Lys-221, and Lys-232. The segment at residues Ala-435–Gly-498 is a DNA-binding region (homeobox 2). The segment at Val-501–Arg-539 is disordered. Lys-613 is covalently cross-linked (Glycyl lysine isopeptide (Lys-Gly) (interchain with G-Cter in SUMO2)). Residues Phe-664 to Leu-690 are disordered. The segment covering Thr-674–Leu-690 has biased composition (polar residues).

It is found in the nucleus. The sequence is that of Highly divergent homeobox (HDX) from Homo sapiens (Human).